The primary structure comprises 631 residues: Probable potassium transport system protein Kup 1 (631 aa).

12 helical membrane-spanning segments follow: residues 17–37, 55–75, 101–121, 140–160, 166–186, 217–237, 249–269, 277–297, 338–358, 370–390, 395–415, and 420–440; these read LALG…LYAL, LSLI…MIIF, PLFY…GMLT, LYPY…SLQA, IGYL…ILGI, FLLG…ADIG, FFIA…NLIV, PFFM…ATVA, IYVP…CLAF, IAVN…AVSI, TFNV…FLGA, and FITG…IMYS.

Belongs to the HAK/KUP transporter (TC 2.A.72) family.

The protein resides in the cell inner membrane. It carries out the reaction K(+)(in) + H(+)(in) = K(+)(out) + H(+)(out). Functionally, transport of potassium into the cell. Likely operates as a K(+):H(+) symporter. This chain is Probable potassium transport system protein Kup 1, found in Legionella pneumophila (strain Corby).